The primary structure comprises 397 residues: MSLSQQSISIIKATVPVLQVHGVNITTTFYRNMFKANPQLLNIFNHSNQREGKQQNALANTVLQAAIHIDKLNELNLAPIVHKHVALGVLPEHYPIVGTNLLGAIKEVLQDAATDEILGAWGEAYGVIAQAFIDAEAALYKVTEEQIGGWRDTREFIVDRKVEESSNIISFYFKPADGKPIATYIPGQYITIKVPLTLENGEQRTHIRHYSLSDTPSEQYYRISVKKEDALKKSDPNGVVSNHLHANVKVGDKVLLSPPAGDYVVDQLSSNPILLVSGGVGITPLLSMAKATLAKQPEREVTFVHSSKNKQYQPFANELSQLEKSNKVKVSTVHSETDGQITKDKLEKFINPSQIKDTKVFICGPVSFMSAINKQLIELGYPKENISYEIFGPLTNV.

One can recognise a Globin domain in the interval 2 to 137; that stretch reads SLSQQSISII…IAQAFIDAEA (136 aa). Residue histidine 84 coordinates heme b. Residues tyrosine 94 and glutamate 136 each act as charge relay system in the active site. A reductase region spans residues 150 to 397; sequence WRDTREFIVD…YEIFGPLTNV (248 aa). One can recognise an FAD-binding FR-type domain in the interval 151 to 266; that stretch reads RDTREFIVDR…SPPAGDYVVD (116 aa). FAD contacts are provided by residues tyrosine 189 and 208–211; that span reads RHYS. 279–284 provides a ligand contact to NADP(+); that stretch reads GVGITP. FAD is bound at residue 390–393; that stretch reads IFGP.

It belongs to the globin family. Two-domain flavohemoproteins subfamily. This sequence in the C-terminal section; belongs to the flavoprotein pyridine nucleotide cytochrome reductase family. FAD serves as cofactor. Requires heme b as cofactor.

It is found in the cytoplasm. The catalysed reaction is 2 nitric oxide + NADPH + 2 O2 = 2 nitrate + NADP(+) + H(+). It catalyses the reaction 2 nitric oxide + NADH + 2 O2 = 2 nitrate + NAD(+) + H(+). Is involved in NO detoxification in an aerobic process, termed nitric oxide dioxygenase (NOD) reaction that utilizes O(2) and NAD(P)H to convert NO to nitrate, which protects the cell from various noxious nitrogen compounds. Therefore, plays a central role in the inducible response to nitrosative stress. In terms of biological role, in the presence of oxygen and NADH, it has NADH oxidase activity, which leads to the generation of superoxide and H(2)O(2). Under anaerobic conditions, it also exhibits nitric oxide reductase and FAD reductase activities. However, all these reactions are much lower than NOD activity. The protein is Flavohemoprotein A (fhbA) of Dictyostelium discoideum (Social amoeba).